The primary structure comprises 240 residues: Uridylate kinase (240 aa).

Residue 13-16 (KASG) coordinates ATP. Residues 21–26 (GSQGFG) are involved in allosteric activation by GTP. Gly-55 is a UMP binding site. Positions 56 and 60 each coordinate ATP. UMP contacts are provided by residues Asp-75 and 136–143 (TGNPFFTT). Thr-163, Gln-164, Tyr-169, and Asp-172 together coordinate ATP.

Belongs to the UMP kinase family. Homohexamer.

It is found in the cytoplasm. It carries out the reaction UMP + ATP = UDP + ADP. It functions in the pathway pyrimidine metabolism; CTP biosynthesis via de novo pathway; UDP from UMP (UMPK route): step 1/1. Its activity is regulated as follows. Allosterically activated by GTP. Inhibited by UTP. Functionally, catalyzes the reversible phosphorylation of UMP to UDP. In Brucella anthropi (strain ATCC 49188 / DSM 6882 / CCUG 24695 / JCM 21032 / LMG 3331 / NBRC 15819 / NCTC 12168 / Alc 37) (Ochrobactrum anthropi), this protein is Uridylate kinase.